The chain runs to 421 residues: Serine hydroxymethyltransferase (421 aa).

Residues leucine 120 and 124-126 (GHL) contribute to the (6S)-5,6,7,8-tetrahydrofolate site. Lysine 229 carries the N6-(pyridoxal phosphate)lysine modification. 354-356 (SPF) contributes to the (6S)-5,6,7,8-tetrahydrofolate binding site.

It belongs to the SHMT family. Homodimer. Requires pyridoxal 5'-phosphate as cofactor.

It localises to the cytoplasm. It catalyses the reaction (6R)-5,10-methylene-5,6,7,8-tetrahydrofolate + glycine + H2O = (6S)-5,6,7,8-tetrahydrofolate + L-serine. Its pathway is one-carbon metabolism; tetrahydrofolate interconversion. The protein operates within amino-acid biosynthesis; glycine biosynthesis; glycine from L-serine: step 1/1. In terms of biological role, catalyzes the reversible interconversion of serine and glycine with tetrahydrofolate (THF) serving as the one-carbon carrier. This reaction serves as the major source of one-carbon groups required for the biosynthesis of purines, thymidylate, methionine, and other important biomolecules. Also exhibits THF-independent aldolase activity toward beta-hydroxyamino acids, producing glycine and aldehydes, via a retro-aldol mechanism. The sequence is that of Serine hydroxymethyltransferase from Opitutus terrae (strain DSM 11246 / JCM 15787 / PB90-1).